A 382-amino-acid polypeptide reads, in one-letter code: MSTYTRPVKLLLCGLLLLTLAIAVLNTLVPLWLAQASLPTWQVGMVSSSYFTGNLVGTLFTGYLIKRIGFNRSYYLASLIFAAGCVGLGVMVGFWSWMSWRFIAGIGCAMIWVVVESALMCSGTSHNRGRLLAAYMMVYYVGTFLGQLLVSKVSGELLHVLPWVTGMILAGILPLLFTRIVNQQTEARYSTSISAMLKLRQARLGVNGCIISGIVLGSLYGLMPLYLKHQGMANASIGFWMAVLVSAGILGQWPVGRLADKFGRLLVLRVQVFVVILGSIVMLTQAAMAPALFILGAAGFTLYPVAMAWACEKVEHHQLVAMNQALLLSYTVGSLLGPSFTAMLMQNYSDNLLFLMIASVSFIYLLMLLRNAGQTPNPVAHI.

The next 12 helical transmembrane spans lie at 14-34 (GLLL…LWLA), 45-65 (MVSS…GYLI), 75-95 (YLAS…VGFW), 102-122 (FIAG…LMCS), 131-151 (LLAA…LLVS), 157-177 (LLHV…PLLF), 204-224 (LGVN…GLMP), 235-255 (ASIG…QWPV), 265-284 (LLVL…VMLT), 289-311 (APAL…AWAC), 325-345 (ALLL…AMLM), and 349-369 (SDNL…LMLL).

This sequence belongs to the major facilitator superfamily. YcaD (TC 2.A.1.26) family.

The protein localises to the cell inner membrane. This is an uncharacterized protein from Salmonella arizonae (strain ATCC BAA-731 / CDC346-86 / RSK2980).